Reading from the N-terminus, the 250-residue chain is Putative inner dynein arm light chain, axonemal (250 aa).

A coiled-coil region spans residues 168–250 (MRKALQAHEE…QLEGITAPKK (83 aa)).

The protein belongs to the inner dynein arm light chain family.

Its subcellular location is the cell projection. It is found in the cilium. It localises to the dynein axonemal particle. Its function is as follows. May play a dynamic role in flagellar motility. The polypeptide is Putative inner dynein arm light chain, axonemal (Drosophila melanogaster (Fruit fly)).